The primary structure comprises 385 residues: Zinc finger protein B385R (385 aa).

Residues 166–190 (LQCPNCGCIQELMGTIFDETHFYNH) form a C2H2-type zinc finger.

The protein belongs to the asfivirus B385R family.

The chain is Zinc finger protein B385R from Ornithodoros (relapsing fever ticks).